Here is a 124-residue protein sequence, read N- to C-terminus: Schlafen-like protein (124 aa).

This sequence belongs to the Schlafen family. Subgroup poxviridae B3 subfamily.

The protein is Schlafen-like protein of Homo sapiens (Human).